A 219-amino-acid polypeptide reads, in one-letter code: uncharacterized protein (219 aa).

The N-terminal stretch at Met-1–Ala-15 is a signal peptide. Residue Asn-118 is glycosylated (N-linked (GlcNAc...) asparagine). The tract at residues Gly-138–Gly-174 is disordered.

As to expression, component of the acid-insoluble and acid-soluble organic matrix of calcified layers of the shell (at protein level).

The protein resides in the secreted. This is an uncharacterized protein from Lottia gigantea (Giant owl limpet).